Here is a 462-residue protein sequence, read N- to C-terminus: N-myc proto-oncogene protein (462 aa).

The interval 19–47 (LEFDSLQPCFYPDEDDFYFGGPDSTPPGE) is interaction with AURKA. Residues 61–90 (LSPSRAFPEHSPEPSNWATEMLLPEADLWG) are interaction with AURKA and FBXW7. The 9aaTAD motif lies at 76-85 (NWATEMLLPE). Disordered stretches follow at residues 134-177 (KLQH…ATLP), 232-289 (AAPA…SSNN), and 332-390 (APSP…LERQ). 2 stretches are compositionally biased toward low complexity: residues 143-176 (GVSS…GATL) and 232-244 (AAPA…PASS). The span at 257–276 (TLSDSDDEDDEEEDEEEEID) shows a compositional bias: acidic residues. 2 positions are modified to phosphoserine; by CK2: S259 and S261. One can recognise a bHLH domain in the interval 379–431 (ERRRNHNILERQRRNDLRSSFLTLRDHVPELVKNEKAAKVVILKKATEYVHAL). Positions 431 to 452 (LQANEHQLLLEKEKLQARQQQL) are leucine-zipper.

In terms of assembly, efficient DNA binding requires dimerization with another bHLH protein. Binds DNA as a heterodimer with MAX. Interacts with KDM5A, KDM5B and HUWE1. Interacts with MYCNOS. Interacts with AURKA; interaction is phospho-independent and triggers AURKA activation; AURKA competes with FBXW7 for binding to unphosphorylated MYCN but not for binding to unphosphorylated MYCN. Interacts with FBXW7; FBXW7 competes with AURKA for binding to unphosphorylated MYCN but not for binding to phosphorylated MYCN. Post-translationally, phosphorylated by GSK3-beta which may promote its degradation. Phosphorylated by AURKA.

Its subcellular location is the nucleus. Positively regulates the transcription of MYCNOS in neuroblastoma cells. This is N-myc proto-oncogene protein (Mycn) from Mus musculus (Mouse).